The sequence spans 292 residues: 4-hydroxy-tetrahydrodipicolinate synthase (292 aa).

Residue threonine 45 coordinates pyruvate. The active-site Proton donor/acceptor is the tyrosine 133. The Schiff-base intermediate with substrate role is filled by lysine 161. Residue isoleucine 203 coordinates pyruvate.

This sequence belongs to the DapA family. As to quaternary structure, homotetramer; dimer of dimers.

It is found in the cytoplasm. The enzyme catalyses L-aspartate 4-semialdehyde + pyruvate = (2S,4S)-4-hydroxy-2,3,4,5-tetrahydrodipicolinate + H2O + H(+). Its pathway is amino-acid biosynthesis; L-lysine biosynthesis via DAP pathway; (S)-tetrahydrodipicolinate from L-aspartate: step 3/4. In terms of biological role, catalyzes the condensation of (S)-aspartate-beta-semialdehyde [(S)-ASA] and pyruvate to 4-hydroxy-tetrahydrodipicolinate (HTPA). The sequence is that of 4-hydroxy-tetrahydrodipicolinate synthase from Salmonella paratyphi A (strain AKU_12601).